Reading from the N-terminus, the 103-residue chain is Cell division protein CrgA (103 aa).

Helical transmembrane passes span 49–69 (FVPLFCALMIIGLIWCVVYYL) and 80–100 (IGAWNLGIGFALIMIGFLMTM).

This sequence belongs to the CrgA family.

It localises to the cell membrane. Functionally, involved in cell division. The chain is Cell division protein CrgA from Bifidobacterium longum (strain NCC 2705).